Here is a 360-residue protein sequence, read N- to C-terminus: Nicotinate-nucleotide--dimethylbenzimidazole phosphoribosyltransferase (360 aa).

Catalysis depends on E327, which acts as the Proton acceptor.

Belongs to the CobT family.

It carries out the reaction 5,6-dimethylbenzimidazole + nicotinate beta-D-ribonucleotide = alpha-ribazole 5'-phosphate + nicotinate + H(+). It participates in nucleoside biosynthesis; alpha-ribazole biosynthesis; alpha-ribazole from 5,6-dimethylbenzimidazole: step 1/2. In terms of biological role, catalyzes the synthesis of alpha-ribazole-5'-phosphate from nicotinate mononucleotide (NAMN) and 5,6-dimethylbenzimidazole (DMB). The chain is Nicotinate-nucleotide--dimethylbenzimidazole phosphoribosyltransferase from Shewanella baltica (strain OS155 / ATCC BAA-1091).